We begin with the raw amino-acid sequence, 316 residues long: Succinoglycan biosynthesis protein ExoV (316 aa).

Its pathway is glycan metabolism; exopolysaccharide biosynthesis. This is Succinoglycan biosynthesis protein ExoV (exoV) from Rhizobium meliloti (strain 1021) (Ensifer meliloti).